A 236-amino-acid chain; its full sequence is MKTIVVCSGGLDSVTLAHKVAAEQQLIGLVSFDYGQRHRKELDFAARCASRLSVPHHIIDIAGIGGHLSGSALTDNVEVPDGHYAEETMKATVVPNRNAIMLAIAFGLAAAQKADAVAVAVHGGDHFIYPDCRPGFIEAFQRMQNEALEGYASVKLLAPYVDVSKAAIVVDGEKHGTPFSETWSCYKGGEPHCGRCGTCVERREAFHLAGVPDPTAYEDQDFWKAAISRYSATEVR.

7–17 serves as a coordination point for ATP; the sequence is CSGGLDSVTLA. Zn(2+)-binding residues include Cys-185, Cys-193, Cys-196, and Cys-199.

Belongs to the QueC family. It depends on Zn(2+) as a cofactor.

The enzyme catalyses 7-carboxy-7-deazaguanine + NH4(+) + ATP = 7-cyano-7-deazaguanine + ADP + phosphate + H2O + H(+). Its pathway is purine metabolism; 7-cyano-7-deazaguanine biosynthesis. Catalyzes the ATP-dependent conversion of 7-carboxy-7-deazaguanine (CDG) to 7-cyano-7-deazaguanine (preQ(0)). The chain is 7-cyano-7-deazaguanine synthase from Rhizobium johnstonii (strain DSM 114642 / LMG 32736 / 3841) (Rhizobium leguminosarum bv. viciae).